The primary structure comprises 373 residues: ATP-dependent 6-phosphofructokinase (373 aa).

Residues glycine 12, 74 to 75 (RD), and 110 to 113 (GGGT) contribute to the ATP site. Substrate contacts are provided by residues 133–135 (TID), arginine 170, 177–179 (MGH), glutamate 230, arginine 291, and 297–300 (YVQR). Aspartate 135 functions as the Proton acceptor in the catalytic mechanism.

The protein belongs to the phosphofructokinase type A (PFKA) family. Mixed-substrate PFK group III subfamily. As to quaternary structure, homodimer or homotetramer. Mg(2+) serves as cofactor.

It is found in the cytoplasm. The catalysed reaction is beta-D-fructose 6-phosphate + ATP = beta-D-fructose 1,6-bisphosphate + ADP + H(+). The protein operates within carbohydrate degradation; glycolysis; D-glyceraldehyde 3-phosphate and glycerone phosphate from D-glucose: step 3/4. Functionally, catalyzes the phosphorylation of D-fructose 6-phosphate to fructose 1,6-bisphosphate by ATP, the first committing step of glycolysis. This chain is ATP-dependent 6-phosphofructokinase, found in Propionibacterium freudenreichii subsp. shermanii (strain ATCC 9614 / DSM 4902 / CIP 103027 / NCIMB 8099 / CIRM-BIA1).